A 244-amino-acid chain; its full sequence is EKC/KEOPS complex subunit Tp53rkb (244 aa).

Residues 24-244 (LSGLELVQQG…LRGRKRSMVG (221 aa)) form the Protein kinase domain. Phosphoserine is present on Ser-25. Residues 30 to 38 (VQQGAEARV) and Lys-51 each bind ATP. The short motif at 69-86 (RRRTVQEARALLRCRRAG) is the Nuclear localization signal element. Asp-153 (proton acceptor) is an active-site residue.

Belongs to the protein kinase superfamily. BUD32 family. As to quaternary structure, component of the EKC/KEOPS complex composed of at least GON7, TP53RK, TPRKB, OSGEP and LAGE3; the whole complex dimerizes.

Its subcellular location is the nucleus. The enzyme catalyses L-seryl-[protein] + ATP = O-phospho-L-seryl-[protein] + ADP + H(+). It catalyses the reaction L-threonyl-[protein] + ATP = O-phospho-L-threonyl-[protein] + ADP + H(+). Functionally, component of the EKC/KEOPS complex that is required for the formation of a threonylcarbamoyl group on adenosine at position 37 (t(6)A37) in tRNAs that read codons beginning with adenine. The complex is probably involved in the transfer of the threonylcarbamoyl moiety of threonylcarbamoyl-AMP (TC-AMP) to the N6 group of A37. TP53RK has ATPase activity in the context of the EKC/KEOPS complex and likely plays a supporting role to the catalytic subunit OSGEP. Atypical protein kinase that phosphorylates 'Ser-15' of p53/TP53 protein and may therefore participate in its activation. The sequence is that of EKC/KEOPS complex subunit Tp53rkb from Mus musculus (Mouse).